A 61-amino-acid polypeptide reads, in one-letter code: Aerolysin regulatory protein (61 aa).

Residues 1–14 (MMIKRHLPQPRHRE) show a composition bias toward basic residues. Residues 1–61 (MMIKRHLPQP…GQTHTGPQIR (61 aa)) form a disordered region. The segment covering 51–61 (DGQTHTGPQIR) has biased composition (polar residues).

In terms of biological role, regulation of the expression of aerolysin. This is Aerolysin regulatory protein (aerC) from Aeromonas sobria.